The chain runs to 3814 residues: MDPQQRLLLEVVFEAFEDAGISLEEMNGSRTSVLCGAFTNDYNAMLTKDLEYYPKYTVTGTGNAILANRISYAFNLKGMSLTIDTACSSSLVGFHLGAQAILNGDCEMAIIVGSALHFDPNIFITMTDLGMLSQEGRCRAFDAGGKGYARGEGICAVILRGQMQAEMHGDHIRALVRATGSNHDGMTQGITLPSSEAQEALIRRTYQSCGLDPADTQYVEAHGTGTARGDPLEMRAIGACFSSPRRSDPLYVGSVKSNIGHAEGASGLAGLIKASMALEKGQIPPNMHFKHPNPEIAFADWQIEVPTRVIDFPSNAQGTRRVSINSFGYGGSNAHVILESYDQLPHVQPTDPGAHRPYLVPLTSHTEKAGKLMVEKLGAYLDDRPSTLVVDLAHSLATRRTLHDERSFAVGASAADIRTQLSEGLPAWTKVRREPVRLGFVFTGQGAQWHAMGRQLLEQCPFFRHTLERADRILATLPDKPEWSIVTELTQPKETSRLGETRLSQPICTALQLAILDLLKSWGIVPQATVGHSSGEVAGAYAAGILTFENAMYAAYYRGLHMSSPRSSTSPGRDAIPGAMLAVGLGEAEAMAETESYRGRAVVAAVNSPSSVTLSGDADAIAEIKERLDAQKVFARRLQVQQAFHSHHMDPLAPAYEEALRNCPGFAATAPACRFFSSVTARVANPDTMGPQYWSANMTGTVRFSDALIGVLLDDLEDPNVDALVEIGPHPALKGPARQVMKSVNMDLPYFASLSRGVPDYEGILALAGQLFQLGYPVDLTAVNSDTYLADSDPPRQTHRAQRIPDLPLYAWDHSDRYWAETRLIKEHRLRPHHHPILGAKMPGSIEGHVRWRNYLRTRELPWLVDHMVDNKVTFPAAGYVTLAIEAALRMKDTVMAAQGVSLRNLSIKSALVLDESEMGSEVVVDIRPQTTSAKSRSDTWLEFTIFSYNGSLTCAEHCTGLISISTATTADGAPSRKPYRQHPQPQPGRMSTASFPAQSFYTHLRQLGLQYGEHFQLLTGTIESGAGFSSSMLTFEPAQYAAQPADRTVVHPTMLDAAFHTIFAALEGLSGRTLQTAFVPTFVHSLDIFPAMLSGMDAPRPLEARVASSAHFSGPRAAVSDVDMYRQGDGEALLSLAGLRLTSLSNGRAAHNRSLFFRTRWQPAFDQLAEDSPALQDQTLAGVLDLFLHQHPDTKILHFTPDINQTRQLVGCLVDQGSERRRFRSITPVATGGAFAEELERVQREQPGCLVTGEPEPEAYDLVIVSEAQEAHPLPFLRDGGYVISHGSAIDETNLTKRFQCADVEVWQRTRETRRDVRPLLLAMAPTPSRRTLDLASHIRAANPDRPVSCLGLQELLARMTGVEDVVVLASLDRDLLSGLDPQGELFFEATRALLIRPDVNVLWLLQDTTAPRHVDSLGSSMIVGLARTARSENPSSRIVTLDLPVDWSPAAVVPWLPQLLDPEVHEDEFHLRDQVLSIPRIENDDGLNSKVPGGVSSGPRPESFSAQRPMRLAIGQAGLLETLVWEDDVEILNEPLPDDEIEIEVKASALNFRDVAAAMGIIDDHRLGDECAGLVRRVGQQVDPAAFQPGDRVVALRPGRGAHRSVVRNPACHCFRLGPMPFEQATALPLILTTAYYSLVETARLQPGETVLIHCAAGGVGQMAIQIAQQIGARIIATVGSPAKRDLLQSRYGLTEAHILSSRDASFVDGVMQLTGGRGVDVVLNSLSGKLLHASWNSLATFGRFIEIGKRDIHENTLIEMDPFRRNVLFASVDMVTIYAQNRALGARIFDHCCNMVHEGRIQLPATILALPYSEAVQGFRLLQMGRHTGKVVLVAEDQGDQVPVSPPTWNAVANRLSPDKTYLLVGGLGGLGRTLTEWLVQRQAKRIAFLSRSGADRPEAQATVAWLRARGIAVSVHAADVADPGHVQACIKAIPDLGGVFHAAMVLADAPLERMSYAQWHRCVQPKVRGAYNLHCATVHCPLDFFVCFSSISAFFGSKAQANYAAANVYLDSLVRYRRQLGLPASSMNCGRITGVGVAAADASLERFMVEEGFDGVNRQELLYQIEEAIFSADHPAPLSGRGTDMSQTLTGVTLERDDVYWAQRSIFRNLYRNHDVEGQSRPGADEVNLSVQLARTIDLSDRVALLMERFVDKVSVVLGLSPESLKPADPVYGLDSLVAVELRNWFTKSVGVDIALFDVLGSPSIQALVEKAIGLFDAQVQQQQQQQQSVQSSSAPSNDDQSPTFNKNLDSQDPSTSLQIPKADCSRPLPMSTFQNRLWVSHRFAADKSRINLAITMHLRGQADHGILEQALSELIARNPILRTAYGEGEAQDEQRVMAPRPFHLGFHDLSKSGPSEGPTASLETLVGSLKRKEMRIEEGEVLEATLVQRSSTECALVLIMHHICTDRSNSQSFVRQLAALYDALRQGRSLSTIPAPKVTYADFTLWHNQLLTSPSMGKGVEYWKQTLAGMPASCQLLPFAKGERPSWDEYGRETVVAALSARQLQRMKRICSQARTSPFHFLLAAFRAFLHRYTADEDLTILMVDGNRPHADLGEVLGFFVNMAPIRCRDACAGSFETLLKTIGGRVLEAMAHSHVPFDVIVAQTQGARTPAHFPVSQVLVNYQQPDEQARYQTTDFTFQGTEVQNMPTGCELSLQAREDAEHGLQLELEYATALYEDGDMRCFFDNFQTFVTSLIQDHRQSIPEVRLAGTLELERLALHCWNSHPPDHGWQPLNLPRRIVEVAETQPRAIAITTSAGEAVTYQDLVASARRVAFSLQNLGIGPGQVVGILASPGIELVTAMLGALFNRCGYVPLDPTMAVGRLAYIVGDSGMQLLLVDEESDPLASSLGRESPSLPNVMSIKNATRAAWPADLPRSLPTDPFYMMYTSGSTGTPKGVPLTQENVGEMLAAMQARFNFTREDRFLHQISPSFDLSVVELFSPLCVGAKLCIATKTTRSDPRLLGDYLRQASVTVTYFTPTQFALVLEHSGASLVACPDYRIALLCGERLPTRLAEAFHQLACAATLYNAWGPTEAAVQTTIHRVQWPADQTLNIPIGHAVGSCRHYIVDAAMNPLPVGFVGEICIGGPQVARGYWNRAESNRQQFLRNPFASPDDHRRGWTRLFRTGDLGRFLPDGQLEFLGRIAGDKQIKLRGFRIDLGEIEHVLHRHSGTPDGQGIVDLAVIAQSAPEDADALTDDRWLVAFIVPKQAIPTEAAKRAYATLLHTRAKPYLNRYMLPAAYQFVDQLPTTASGKTDRRALGASQAPGTPPQHGAGPAAASTLDPAQAQAQDRADEEVGDRTMATVTRVWQEVLRLDHDIPVEPTSNFFDMGGSSTLLLRLQGKLQTTLSIPISLQEMVRRPTLVQLVELVHSKVPREGQPPPTPGSRPEEDVVDWAQETTLPAETRYHPPSAPMSPGGRDILMTGAESFTGIHLLAQLLTSHPSGTIHLLGTHHPWDHAQVFQRLQEYNLLNATLTPEQILTRLRTIPGSLAEGSHFGLSPRAFEALGRSIATIYHLASEVSLLKTYHDLKPINTAAILPLIELARWGGPSPIHYLSTWSVPHLQLWTAPPTTPAVVHEASAGHFTPPPTADQGYFKSRWAAEMLLTHAAARGFPVTIYRASAVTGNPTTGLPAPAGDFVRSLILDMLRHRLVPRFARESPAPVVVDLVPVNYLTALLAHLAQRPRAAAAEGPRPAGVEIFHLTNPTPLPLDQLPGLTGSIRGDATAGRVVSVDDWLAAVSGSDPAAAAADEDEQLRVQVAGGYFRRGHQMFALDRRRTDAALGGVTEGWVDCPPVDANYLRALWLQKV.

In terms of domain architecture, Ketosynthase family 3 (KS3) spans 1 to 340 (MDPQQRLLLE…GSNAHVILES (340 aa)). Catalysis depends on for beta-ketoacyl synthase activity residues Cys87, His222, and His261. The interval 441–758 (VFTGQGAQWH…PYFASLSRGV (318 aa)) is malonyl-CoA:ACP transacylase (MAT) domain. Catalysis depends on Ser533, which acts as the For malonyltransferase activity. The N-terminal hotdog fold stretch occupies residues 835 to 970 (HPILGAKMPG…GLISISTATT (136 aa)). The interval 835–1149 (HPILGAKMPG…LRLTSLSNGR (315 aa)) is dehydratase (DH) domain. Residues 835-1151 (HPILGAKMPG…LTSLSNGRAA (317 aa)) enclose the PKS/mFAS DH domain. His867 acts as the Proton acceptor; for dehydratase activity in catalysis. The segment at 970–993 (TADGAPSRKPYRQHPQPQPGRMST) is disordered. The tract at residues 991 to 1151 (MSTASFPAQS…LTSLSNGRAA (161 aa)) is C-terminal hotdog fold. The active-site Proton donor; for dehydratase activity is Asp1057. The enoyl reductase (ER) domain stretch occupies residues 1520 to 1836 (GLLETLVWED…MGRHTGKVVL (317 aa)). Positions 1864-2036 (TYLLVGGLGG…PASSMNCGRI (173 aa)) are ketoreductase (KR) domain. The 80-residue stretch at 2141–2220 (IDLSDRVALL…ALVEKAIGLF (80 aa)) folds into the Carrier 1 domain. Ser2180 is modified (O-(pantetheine 4'-phosphoryl)serine). The span at 2228 to 2238 (QQQQQSVQSSS) shows a compositional bias: low complexity. Residues 2228–2270 (QQQQQSVQSSSAPSNDDQSPTFNKNLDSQDPSTSLQIPKADCS) are disordered. Residues 2239 to 2263 (APSNDDQSPTFNKNLDSQDPSTSLQ) are compositionally biased toward polar residues. The interval 2273-2718 (LPMSTFQNRL…PEVRLAGTLE (446 aa)) is condensation (C) domain 7. An adenylation (A) domain 8 region spans residues 2738–3149 (PLNLPRRIVE…DGQLEFLGRI (412 aa)). The segment at 3257 to 3304 (SGKTDRRALGASQAPGTPPQHGAGPAAASTLDPAQAQAQDRADEEVGD) is disordered. One can recognise a Carrier 2 domain in the interval 3304-3379 (DRTMATVTRV…QLVELVHSKV (76 aa)). At Ser3339 the chain carries O-(pantetheine 4'-phosphoryl)serine. The segment at 3428-3680 (MTGAESFTGI…VDLVPVNYLT (253 aa)) is thioesterase (TE) domain.

It in the C-terminal section; belongs to the NRP synthetase family.

It participates in secondary metabolite biosynthesis. Hybrid PKS-NRPS synthetase; part of the gene cluster that mediates the biosynthesis of pyranoviolin A, a pyranonigrin analog with a C-3 methoxy group. Initially, the PKS portion of pyvA synthesizes C-10 carbon chain from 5 molecules of malonyl-CoA, which is then condensed with the thiolation (T) domain-bound glycine activated by the adenylation (A) domain. The subsequent chain release by Dieckmann condensation (DKC) could be catalyzed by the TE domain present at the C-terminus of pyvA and/or the alpha/beta hydrolase pyvD, installing the tetramic acid moiety. The FAD-dependent monooxygenase pyvC next epoxidizes one of the olefins of the polyketide part, and the epoxide ring-opening induces the dihydro-gamma-pyrone ring formation. The cytochrome P450 monooxygeanse pyvB would be responsible for the 2 consecutive reactions, in which the dihydro-gamma-pyrone is oxidized to gamma-pyrone and C-7 is hydroxylated to yield pyranonigrin F. Finally, the O-methyltransferase pyvH methylates the C-3 hydroxy group to complete the biosynthesis. This chain is Hybrid PKS-NRPS synthetase pyvA, found in Aspergillus violaceofuscus (strain CBS 115571).